The primary structure comprises 967 residues: Leucine--tRNA ligase (967 aa).

Residues 43-53 (PYLSGHLHVGH) carry the 'HIGH' region motif. A 'KMSKS' region motif is present at residues 650–654 (KMSKS). Lysine 653 contacts ATP.

Belongs to the class-I aminoacyl-tRNA synthetase family.

The protein localises to the cytoplasm. It carries out the reaction tRNA(Leu) + L-leucine + ATP = L-leucyl-tRNA(Leu) + AMP + diphosphate. The sequence is that of Leucine--tRNA ligase from Thermococcus kodakarensis (strain ATCC BAA-918 / JCM 12380 / KOD1) (Pyrococcus kodakaraensis (strain KOD1)).